Here is a 556-residue protein sequence, read N- to C-terminus: Sensory neuron membrane protein 2 (556 aa).

The Cytoplasmic segment spans residues 1-6 (MIHWSL). The chain crosses the membrane as a helical span at residues 7–27 (IVSALGVCVAVLGGYCGWILF). At 28 to 522 (PNMVHKKVEQ…KLINTLKTLN (495 aa)) the chain is on the extracellular side. N-linked (GlcNAc...) asparagine glycosylation is found at N66, N274, N310, and N324. Intrachain disulfides connect C320/C388 and C349/C415. Residues 523 to 543 (IVHWATLCGGIGVAVACLIYY) form a helical membrane-spanning segment. The Cytoplasmic portion of the chain corresponds to 544–556 (IYQRGRVVEPPVK).

Belongs to the CD36 family. In terms of tissue distribution, detected in the head and to a lesser extent in legs and wings.

The protein localises to the cell membrane. In terms of biological role, plays an olfactory role that is not restricted to pheromone sensitivity. This is Sensory neuron membrane protein 2 from Drosophila melanogaster (Fruit fly).